A 417-amino-acid chain; its full sequence is UDP-N-acetylglucosamine 1-carboxyvinyltransferase (417 aa).

Residue K22–N23 participates in phosphoenolpyruvate binding. UDP-N-acetyl-alpha-D-glucosamine is bound at residue R91. C115 (proton donor) is an active-site residue. At C115 the chain carries 2-(S-cysteinyl)pyruvic acid O-phosphothioketal. UDP-N-acetyl-alpha-D-glucosamine-binding positions include R120–L124, D304, and I326.

It belongs to the EPSP synthase family. MurA subfamily.

The protein resides in the cytoplasm. It catalyses the reaction phosphoenolpyruvate + UDP-N-acetyl-alpha-D-glucosamine = UDP-N-acetyl-3-O-(1-carboxyvinyl)-alpha-D-glucosamine + phosphate. The protein operates within cell wall biogenesis; peptidoglycan biosynthesis. In terms of biological role, cell wall formation. Adds enolpyruvyl to UDP-N-acetylglucosamine. This chain is UDP-N-acetylglucosamine 1-carboxyvinyltransferase, found in Nitratidesulfovibrio vulgaris (strain DP4) (Desulfovibrio vulgaris).